A 235-amino-acid polypeptide reads, in one-letter code: MINVLIVEDDPMVGELNKRYLSQIDGFQLKGIASSFQSALHILGEHHIDLILLDIYMPGKNGLELLTELRAQNEAVDVIVISAASELDVIKKTLRYGAVDYLIKPFEFERFQTALSDYRRKQKVYSTHRNMSQKELDAELFQKKEATEKVQLPKGLTKSTLKLIWSSIQSFENESFTTEDLAKHTEISQVSIRKYLKFLEDIQVLNVEMAYGTIGRPVFQYNVNNSNINGIKQYL.

Residues 3-119 form the Response regulatory domain; that stretch reads NVLIVEDDPM…RFQTALSDYR (117 aa). At aspartate 54 the chain carries 4-aspartylphosphate. The H-T-H motif DNA-binding region spans 178-197; the sequence is TEDLAKHTEISQVSIRKYLK.

Post-translationally, phosphorylated and activated by MalK.

The protein resides in the cytoplasm. Functionally, member of a two-component regulatory system MalK/MalR. Activates transcription of maeA, maeN and yflS in presence of malate by binding to their promoter region. In Bacillus subtilis (strain 168), this protein is Transcriptional regulatory protein MalR (malR).